The sequence spans 225 residues: Transcription factor MYB1 (225 aa).

2 consecutive HTH myb-type domains span residues 11–67 (LGRV…KPSI) and 68–118 (KRGH…YKKH). DNA-binding regions (H-T-H motif) lie at residues 39–63 (WKRV…LNYL) and 91–114 (WSLI…NTHL).

As to quaternary structure, no interactions with bHLH.

It localises to the nucleus. Activates DODA1 and CYP76AD1 in the betalain red pigment pathway. This Beta vulgaris (Sugar beet) protein is Transcription factor MYB1.